The chain runs to 934 residues: Oxysterol-binding protein-related protein 6 (934 aa).

A disordered region spans residues 1–62; that stretch reads MSSDEKGISP…RQLLEPEPVP (62 aa). Serine 2 is modified (N-acetylserine). Low complexity predominate over residues 14-29; it reads TSTPTHRSASSSTSSQ. A compositionally biased stretch (basic and acidic residues) spans 30–40; the sequence is RDSRQSIHILE. A Phosphoserine modification is found at serine 35. The segment covering 42 to 53 has biased composition (polar residues); the sequence is TASSSTEPSVSR. The PH domain maps to 86 to 181; it reads PDKHEGFMLK…WVSKLRHHRL (96 aa). A phosphoserine mark is found at serine 190 and serine 290.

This sequence belongs to the OSBP family. In terms of assembly, homodimer. Interacts with OSBPL3. As to expression, expressed in brain and striated muscle (at protein level). Widely expressed. Expressed in skeletal muscle.

Its subcellular location is the cytoplasm. It is found in the cytosol. The protein localises to the endoplasmic reticulum membrane. The protein resides in the nucleus envelope. It localises to the cell membrane. Its subcellular location is the endosome membrane. Its function is as follows. Regulates cellular transport and efflux of cholesterol. Plays a role in phosphatidylinositol-4-phophate (PI4P) turnover at the neuronal membrane. Binds via its PH domain PI4P, phosphatidylinositol-4,5-diphosphate, phosphatidylinositol-3,4,5-triphosphate, and phosphatidic acid. Weakly binds 25-hydroxycholesterol. This is Oxysterol-binding protein-related protein 6 (OSBPL6) from Homo sapiens (Human).